The chain runs to 245 residues: Ribosomal RNA small subunit methyltransferase G (245 aa).

S-adenosyl-L-methionine is bound by residues Gly85, Phe90, 108 to 110 (DST), 136 to 137 (AE), and Arg155.

It belongs to the methyltransferase superfamily. RNA methyltransferase RsmG family.

The protein localises to the cytoplasm. In terms of biological role, specifically methylates the N7 position of a guanine in 16S rRNA. This is Ribosomal RNA small subunit methyltransferase G from Nostoc sp. (strain PCC 7120 / SAG 25.82 / UTEX 2576).